A 172-amino-acid polypeptide reads, in one-letter code: Ribosome maturation factor RimM (172 aa).

A PRC barrel domain is found at 96 to 169; that stretch reads PDEFYDHQLE…AIEIDPPEGL (74 aa).

The protein belongs to the RimM family. As to quaternary structure, binds ribosomal protein uS19.

The protein resides in the cytoplasm. An accessory protein needed during the final step in the assembly of 30S ribosomal subunit, possibly for assembly of the head region. Essential for efficient processing of 16S rRNA. May be needed both before and after RbfA during the maturation of 16S rRNA. It has affinity for free ribosomal 30S subunits but not for 70S ribosomes. This chain is Ribosome maturation factor RimM, found in Mycolicibacterium vanbaalenii (strain DSM 7251 / JCM 13017 / BCRC 16820 / KCTC 9966 / NRRL B-24157 / PYR-1) (Mycobacterium vanbaalenii).